The primary structure comprises 92 residues: Beta-2-microglobulin (92 aa).

The 88-residue stretch at 2-89 (PQIQVYSRHP…NHVSMDKPMT (88 aa)) folds into the Ig-like C1-type domain. Cys-22 and Cys-77 are disulfide-bonded.

Belongs to the beta-2-microglobulin family. In terms of assembly, heterodimer of an alpha chain and a beta chain. Beta-2-microglobulin is the beta-chain of major histocompatibility complex class I molecules.

The protein resides in the secreted. Functionally, component of the class I major histocompatibility complex (MHC). Involved in the presentation of peptide antigens to the immune system. The protein is Beta-2-microglobulin (B2m) of Mus spretus (Western Mediterranean mouse).